A 148-amino-acid polypeptide reads, in one-letter code: Endothelial differentiation-related factor 1 (148 aa).

An N-acetylalanine modification is found at A2. S4 bears the Phosphoserine mark. K25 is subject to N6-methyllysine. The span at 33-42 shows a compositional bias: basic and acidic residues; it reads RRGEDVETSK. The interval 33 to 66 is disordered; it reads RRGEDVETSKKWAAGQNKQHSITKNTAKLDRETE. Positions 37–113 are interaction with NR5A2, PPARG and NR1H3; sequence DVETSKKWAA…QVIADYESGR (77 aa). A compositionally biased stretch (polar residues) spans 48–58; it reads QNKQHSITKNT. Positions 69–108 are interaction with TBP and NR5A1; that stretch reads HHDRVTLEVGKVIQQGRQSKGLTQKDLATKINEKPQVIAD. The short motif at 81-88 is the IQ motif element; the sequence is IQQGRQSK. The HTH cro/C1-type domain maps to 81–135; it reads IQQGRQSKGLTQKDLATKINEKPQVIADYESGRAIPNNQVLGKIERAIGLKLRGK. The segment at residues 92–111 is a DNA-binding region (H-T-H motif); that stretch reads QKDLATKINEKPQVIADYES.

Interacts with TBP and the transcription factor IID (TFIID) complex, NR5A2, NR1H3 and PPARG. Interaction with TBP is regulated by phosphorylation. Binds NR5A1, ATF1, FOS and JUN via their conserved basic region. Binding to calmodulin is regulated by calcium and phosphorylation of the IQ motif. In terms of processing, phosphorylated (by PKA and PKC). In terms of tissue distribution, expressed in brain, liver, lung, kidney and heart (at protein level). Ubiquitously expressed. More abundant in heart, pancreas, liver, intestine and adipose tissues.

The protein resides in the cytoplasm. The protein localises to the nucleus. In terms of biological role, transcriptional coactivator stimulating NR5A1 and ligand-dependent NR1H3/LXRA and PPARG transcriptional activities. Enhances the DNA-binding activity of ATF1, ATF2, CREB1 and NR5A1. Regulates nitric oxid synthase activity probably by sequestering calmodulin in the cytoplasm. May function in endothelial cells differentiation, hormone-induced cardiomyocytes hypertrophy and lipid metabolism. The sequence is that of Endothelial differentiation-related factor 1 (EDF1) from Homo sapiens (Human).